The chain runs to 368 residues: N-acetylneuraminate epimerase (368 aa).

The N-terminal stretch at Met-1–Ala-19 is a signal peptide. 7 Kelch repeats span residues Thr-40–Asp-84, Asn-86–Asn-137, Lys-139–Ala-173, His-174–Gly-219, Thr-222–Gly-265, Glu-287–Asn-336, and Leu-338–Gln-367. The Proton acceptor role is filled by Glu-228.

Belongs to the NanM family. Homodimer.

It localises to the periplasm. It catalyses the reaction N-acetyl-alpha-neuraminate = N-acetyl-beta-neuraminate. Its function is as follows. Converts alpha-N-acetylneuranimic acid (Neu5Ac) to the beta-anomer, accelerating the equilibrium between the alpha- and beta-anomers. Probably facilitates sialidase-negative bacteria to compete successfully for limited amounts of extracellular Neu5Ac, which is likely taken up in the beta-anomer. In addition, the rapid removal of sialic acid from solution might be advantageous to the bacterium to damp down host responses. The sequence is that of N-acetylneuraminate epimerase from Escherichia coli O9:H4 (strain HS).